A 78-amino-acid chain; its full sequence is Toxin BmTxKS4 (78 aa).

Residues 1 to 21 (MKLKISFLILVLFSVFFAIEG) form the signal peptide. Positions 22-32 (IIKWFPASVNG) are excised as a propeptide.

In terms of processing, contains 3 disulfide bonds. Expressed by the venom gland.

It is found in the secreted. Functionally, reversibly inhibits potassium channels. This chain is Toxin BmTxKS4, found in Olivierus martensii (Manchurian scorpion).